Consider the following 355-residue polypeptide: Uroporphyrinogen decarboxylase (355 aa).

Residues 38-42, D87, Y162, S217, and H331 each bind substrate; that span reads RQAGR.

Belongs to the uroporphyrinogen decarboxylase family. In terms of assembly, homodimer.

It localises to the cytoplasm. The catalysed reaction is uroporphyrinogen III + 4 H(+) = coproporphyrinogen III + 4 CO2. The protein operates within porphyrin-containing compound metabolism; protoporphyrin-IX biosynthesis; coproporphyrinogen-III from 5-aminolevulinate: step 4/4. Its function is as follows. Catalyzes the decarboxylation of four acetate groups of uroporphyrinogen-III to yield coproporphyrinogen-III. This Streptomyces avermitilis (strain ATCC 31267 / DSM 46492 / JCM 5070 / NBRC 14893 / NCIMB 12804 / NRRL 8165 / MA-4680) protein is Uroporphyrinogen decarboxylase.